The sequence spans 474 residues: Synaptotagmin-17 (474 aa).

Residues 60-112 (WLMASRSSDKDGDSVHTASEVPLTPRTNSPDGRRSSSDTSKSTYSLTRRISSL) are disordered. Low complexity predominate over residues 96 to 112 (SDTSKSTYSLTRRISSL). Phosphoserine is present on residues Ser118 and Ser119. C2 domains follow at residues 184–310 (QLGM…HWWK) and 321–455 (ELGE…EQWH).

The protein belongs to the synaptotagmin family.

Its subcellular location is the membrane. In terms of biological role, plays a role in dendrite formation by melanocytes. This is Synaptotagmin-17 (SYT17) from Pongo abelii (Sumatran orangutan).